Consider the following 309-residue polypeptide: Peptide methionine sulfoxide reductase MsrA/MsrB (309 aa).

The interval Met-1 to Asn-153 is peptide methionine sulfoxide reductase A. Cys-8 is an active-site residue. The 124-residue stretch at Ala-170–Lys-293 folds into the MsrB domain. The Nucleophile role is filled by Cys-282.

The protein in the N-terminal section; belongs to the MsrA Met sulfoxide reductase family. It in the C-terminal section; belongs to the MsrB Met sulfoxide reductase family.

The catalysed reaction is L-methionyl-[protein] + [thioredoxin]-disulfide + H2O = L-methionyl-(S)-S-oxide-[protein] + [thioredoxin]-dithiol. It catalyses the reaction [thioredoxin]-disulfide + L-methionine + H2O = L-methionine (S)-S-oxide + [thioredoxin]-dithiol. The enzyme catalyses L-methionyl-[protein] + [thioredoxin]-disulfide + H2O = L-methionyl-(R)-S-oxide-[protein] + [thioredoxin]-dithiol. Its function is as follows. Has an important function as a repair enzyme for proteins that have been inactivated by oxidation. Catalyzes the reversible oxidation-reduction of methionine sulfoxide in proteins to methionine. This Streptococcus pyogenes serotype M18 (strain MGAS8232) protein is Peptide methionine sulfoxide reductase MsrA/MsrB (msrAB).